We begin with the raw amino-acid sequence, 470 residues long: Neuraminidase (470 aa).

Over 1 to 14 the chain is Intravirion; that stretch reads MNPNQKIITIGSAS. An involved in apical transport and lipid raft association region spans residues 11-32; the sequence is GSASLGLVFLNVILHVVSITVT. The chain crosses the membrane as a helical span at residues 15–35; sequence LGLVFLNVILHVVSITVTVLV. Residues 32–86 are hypervariable stalk region; sequence TVLVLSNNVTGPNCNGTIIREYNGTVRIERITQWYNTNIIEYIERPSNEYYMSNT. At 36 to 470 the chain is on the virion surface side; the sequence is LSNNVTGPNC…AILPFDIDKM (435 aa). 3 N-linked (GlcNAc...) asparagine; by host glycosylation sites follow: N39, N46, and N54. A head of neuraminidase region spans residues 89–470; sequence LCEAQGFAPF…AILPFDIDKM (382 aa). Intrachain disulfides connect C90-C417, C122-C127, C182-C229, C231-C236, C277-C290, C279-C288, C316-C335, and C421-C446. A substrate-binding site is contributed by R116. N144 carries an N-linked (GlcNAc...) asparagine; by host glycan. Residue D149 is the Proton donor/acceptor of the active site. Residue R150 participates in substrate binding. Residue 275–276 participates in substrate binding; sequence EE. R291 provides a ligand contact to substrate. D292 contributes to the Ca(2+) binding site. Residue N293 is glycosylated (N-linked (GlcNAc...) asparagine; by host). Ca(2+) is bound by residues G296 and D322. R368 lines the substrate pocket. N398 carries N-linked (GlcNAc...) asparagine; by host glycosylation. Residue Y402 is the Nucleophile of the active site.

Belongs to the glycosyl hydrolase 34 family. As to quaternary structure, homotetramer. Ca(2+) is required as a cofactor. Post-translationally, N-glycosylated.

The protein resides in the virion membrane. The protein localises to the host apical cell membrane. It carries out the reaction Hydrolysis of alpha-(2-&gt;3)-, alpha-(2-&gt;6)-, alpha-(2-&gt;8)- glycosidic linkages of terminal sialic acid residues in oligosaccharides, glycoproteins, glycolipids, colominic acid and synthetic substrates.. Inhibited by the neuraminidase inhibitors zanamivir (Relenza) and oseltamivir (Tamiflu). These drugs interfere with the release of progeny virus from infected cells and are effective against all influenza strains. Resistance to neuraminidase inhibitors is quite rare. Its function is as follows. Catalyzes the removal of terminal sialic acid residues from viral and cellular glycoconjugates. Cleaves off the terminal sialic acids on the glycosylated HA during virus budding to facilitate virus release. Additionally helps virus spread through the circulation by further removing sialic acids from the cell surface. These cleavages prevent self-aggregation and ensure the efficient spread of the progeny virus from cell to cell. Otherwise, infection would be limited to one round of replication. Described as a receptor-destroying enzyme because it cleaves a terminal sialic acid from the cellular receptors. May facilitate viral invasion of the upper airways by cleaving the sialic acid moieties on the mucin of the airway epithelial cells. Likely to plays a role in the budding process through its association with lipid rafts during intracellular transport. May additionally display a raft-association independent effect on budding. Plays a role in the determination of host range restriction on replication and virulence. Sialidase activity in late endosome/lysosome traffic seems to enhance virus replication. The chain is Neuraminidase from Aves (Horse).